The primary structure comprises 225 residues: Probable septum site-determining protein MinC (225 aa).

It belongs to the MinC family. As to quaternary structure, interacts with MinD and FtsZ.

Cell division inhibitor that blocks the formation of polar Z ring septums. Rapidly oscillates between the poles of the cell to destabilize FtsZ filaments that have formed before they mature into polar Z rings. Prevents FtsZ polymerization. This Listeria welshimeri serovar 6b (strain ATCC 35897 / DSM 20650 / CCUG 15529 / CIP 8149 / NCTC 11857 / SLCC 5334 / V8) protein is Probable septum site-determining protein MinC.